We begin with the raw amino-acid sequence, 152 residues long: UPF0266 membrane protein YobD (152 aa).

Helical transmembrane passes span 6-26 (LVLI…QFIM), 45-65 (VDSV…VTSH), and 67-87 (AQMT…IFWI).

This sequence belongs to the UPF0266 family.

The protein localises to the cell inner membrane. The sequence is that of UPF0266 membrane protein YobD from Salmonella paratyphi A (strain ATCC 9150 / SARB42).